A 120-amino-acid polypeptide reads, in one-letter code: uncharacterized protein (120 aa).

The region spanning 7 to 120 (VFAKIITKNL…KLIGLINNND (114 aa)) is the HIT domain. The short motif at 101–105 (HFHFH) is the Histidine triad motif element.

This is an uncharacterized protein from Rickettsia prowazekii (strain Madrid E).